Here is a 195-residue protein sequence, read N- to C-terminus: HTH-type transcriptional regulator BetI (195 aa).

Residues E8 to L68 form the HTH tetR-type domain. Positions T31–F50 form a DNA-binding region, H-T-H motif.

It functions in the pathway amine and polyamine biosynthesis; betaine biosynthesis via choline pathway [regulation]. In terms of biological role, repressor involved in the biosynthesis of the osmoprotectant glycine betaine. It represses transcription of the choline transporter BetT and the genes of BetAB involved in the synthesis of glycine betaine. This chain is HTH-type transcriptional regulator BetI, found in Burkholderia thailandensis (strain ATCC 700388 / DSM 13276 / CCUG 48851 / CIP 106301 / E264).